A 345-amino-acid polypeptide reads, in one-letter code: Phosphate acyltransferase (345 aa).

The protein belongs to the PlsX family. Homodimer. Probably interacts with PlsY.

The protein resides in the cytoplasm. The catalysed reaction is a fatty acyl-[ACP] + phosphate = an acyl phosphate + holo-[ACP]. It functions in the pathway lipid metabolism; phospholipid metabolism. Functionally, catalyzes the reversible formation of acyl-phosphate (acyl-PO(4)) from acyl-[acyl-carrier-protein] (acyl-ACP). This enzyme utilizes acyl-ACP as fatty acyl donor, but not acyl-CoA. This chain is Phosphate acyltransferase, found in Thermodesulfovibrio yellowstonii (strain ATCC 51303 / DSM 11347 / YP87).